The following is a 253-amino-acid chain: Proproteinase E (253 aa).

The propeptide at 1-11 (FSQPFSRPSSR) is activation peptide. Positions 12–251 (VVNGEDAVPY…FIDWIDETIA (240 aa)) constitute a Peptidase S1 domain. Disulfide bonds link Cys-41–Cys-57, Cys-100–Cys-103, Cys-140–Cys-206, Cys-171–Cys-187, and Cys-196–Cys-227.

It belongs to the peptidase S1 family. In terms of assembly, monomer. The zymogen is secreted as a ternary complex composed of procarboxypeptidase A, chymotrypsinogen C and proproteinase E. As to expression, pancreas.

It localises to the secreted. It is found in the extracellular space. In terms of biological role, may protect procarboxypeptidase A against denaturation in the acidic environment of the ruminant duodenum. The polypeptide is Proproteinase E (Bos taurus (Bovine)).